A 957-amino-acid polypeptide reads, in one-letter code: Serine-aspartate repeat-containing protein C (957 aa).

A signal peptide spans 1-50 (MNNKKTVTNRKGMIPNRLNKFSIRKYSVGTASILVGTTLIFGLSGHEAKA). Residues 51–166 (AEHTNGELNQ…TPKTTTIKPR (116 aa)) form a disordered region. Positions 51 to 495 (AEHTNGELNQ…GSSTANGDQK (445 aa)) are ligand binding A region. Residues 56–71 (GELNQSKNETTAPSEN) are compositionally biased toward polar residues. A compositionally biased stretch (basic and acidic residues) spans 72–83 (KTTEKVDSRQLK). A compositionally biased stretch (polar residues) spans 84–114 (DNTQTATADQPKVTMSDSATVKETSSNMQSP). Over residues 115-132 (QNATASQSTTQTSNVTTN) the composition is skewed to low complexity. The segment covering 133–164 (DKSSTTYSNETDKSNLTQAKDVSATPKTTTIK) has biased composition (polar residues). 2 CNA-B domains span residues 496-606 (KYNL…YKTP) and 607-717 (KYSL…EEET). The interval 678–937 (TQTGTNTTED…NNSNNGTLFG (260 aa)) is disordered. Acidic residues-rich tracts occupy residues 685–695 (TEDDKDADGGE) and 712–896 (YYEE…DSDS). The LPXTG sorting signal motif lies at 920–924 (LPETG). Low complexity predominate over residues 922–937 (ETGSENNNSNNGTLFG). The residue at position 923 (T923) is a Pentaglycyl murein peptidoglycan amidated threonine. Positions 924-957 (GSENNNSNNGTLFGGLFAALGSLLLFGRRKKQNK) are cleaved as a propeptide — removed by sortase.

Belongs to the serine-aspartate repeat-containing protein (SDr) family. As to quaternary structure, homodimerizes; via N2-Domain. Interacts with host NRXN1; this interaction mediates bacterial attachment to host cells.

The protein resides in the secreted. Its subcellular location is the cell wall. Functionally, cell surface-associated calcium-binding protein which plays an important role in adhesion and pathogenesis. Mediates interactions with components of the extracellular matrix such as host NRXN1 to promote bacterial adhesion. The chain is Serine-aspartate repeat-containing protein C (sdrC) from Staphylococcus aureus (strain MSSA476).